The chain runs to 364 residues: Natterin-3 (364 aa).

A signal peptide spans 1–18; that stretch reads MKLSVLVVTLLAVSWTSA. A propeptide spanning residues 19–42 is cleaved from the precursor; sequence QPETFSIQTKEANMNPEPANIRVA.

The protein belongs to the natterin family. Post-translationally, contains 4 disulfide bonds. In terms of tissue distribution, expressed by the venom gland.

It localises to the secreted. Inhibited by tissue-kallikrein inhibitor TKI and trasylol. Plasma kallikrein inhibitor PKSI527 and classical inhibitors of serine-, metallo-, thiol- or aspartate-peptidases evokes a minor inhibition of the peptide digestion. Shows nociceptive, edema-inducing and kininogenase activity with release of kallidin from low molecular weight kininogen. The cleavage occurs at Met-Lys bonds. This chain is Natterin-3, found in Thalassophryne nattereri (Copper Joe toadfish).